Consider the following 144-residue polypeptide: 3-hydroxyacyl-[acyl-carrier-protein] dehydratase FabZ (144 aa).

His-49 is a catalytic residue.

This sequence belongs to the thioester dehydratase family. FabZ subfamily.

The protein resides in the cytoplasm. The catalysed reaction is a (3R)-hydroxyacyl-[ACP] = a (2E)-enoyl-[ACP] + H2O. Its function is as follows. Involved in unsaturated fatty acids biosynthesis. Catalyzes the dehydration of short chain beta-hydroxyacyl-ACPs and long chain saturated and unsaturated beta-hydroxyacyl-ACPs. The sequence is that of 3-hydroxyacyl-[acyl-carrier-protein] dehydratase FabZ from Clostridium kluyveri (strain NBRC 12016).